The following is a 186-amino-acid chain: Probable GTP-binding protein EngB (186 aa).

The region spanning 18 to 186 is the EngB-type G domain; the sequence is DKKEICFIGR…LKKLIGSVIL (169 aa). GTP contacts are provided by residues 26 to 33, 52 to 56, 69 to 72, 135 to 138, and 166 to 168; these read GRSNVGKS, GRTQL, DLPG, NKAD, and VSA. Residues Ser-33 and Thr-54 each coordinate Mg(2+).

The protein belongs to the TRAFAC class TrmE-Era-EngA-EngB-Septin-like GTPase superfamily. EngB GTPase family. Requires Mg(2+) as cofactor.

Necessary for normal cell division and for the maintenance of normal septation. The chain is Probable GTP-binding protein EngB from Malacoplasma penetrans (strain HF-2) (Mycoplasma penetrans).